The following is a 92-amino-acid chain: Putative membrane protein insertion efficiency factor (92 aa).

Belongs to the UPF0161 family.

The protein localises to the cell membrane. Functionally, could be involved in insertion of integral membrane proteins into the membrane. This chain is Putative membrane protein insertion efficiency factor, found in Tropheryma whipplei (strain TW08/27) (Whipple's bacillus).